The sequence spans 477 residues: Histidine--tRNA ligase (477 aa).

It belongs to the class-II aminoacyl-tRNA synthetase family. As to quaternary structure, homodimer.

It localises to the cytoplasm. The catalysed reaction is tRNA(His) + L-histidine + ATP = L-histidyl-tRNA(His) + AMP + diphosphate + H(+). This chain is Histidine--tRNA ligase (hisS), found in Xanthomonas campestris pv. campestris (strain ATCC 33913 / DSM 3586 / NCPPB 528 / LMG 568 / P 25).